The primary structure comprises 550 residues: Hydroxylamine reductase (550 aa).

The [2Fe-2S] cluster site is built by cysteine 3, cysteine 6, cysteine 18, and cysteine 25. Hybrid [4Fe-2O-2S] cluster contacts are provided by histidine 249, glutamate 273, cysteine 317, cysteine 405, cysteine 433, cysteine 458, glutamate 492, and lysine 494. Cysteine 405 is modified (cysteine persulfide).

It belongs to the HCP family. It depends on [2Fe-2S] cluster as a cofactor. The cofactor is hybrid [4Fe-2O-2S] cluster.

Its subcellular location is the cytoplasm. The catalysed reaction is A + NH4(+) + H2O = hydroxylamine + AH2 + H(+). In terms of biological role, catalyzes the reduction of hydroxylamine to form NH(3) and H(2)O. This is Hydroxylamine reductase from Salmonella enteritidis PT4 (strain P125109).